Reading from the N-terminus, the 957-residue chain is Melanoma-associated antigen E1 (957 aa).

Positions 1-455 are disordered; that stretch reads MSLVSQNSRR…DSEGPKGAEG (455 aa). Composition is skewed to polar residues over residues 85–96 and 104–130; these read SEASSASGQPTI and VLPTPSEGLSTSGPPTISKGLCTSVTL. Residues 138–162 show a composition bias toward low complexity; sequence TSRPPTSSEEPSTSVPPTASEVPST. Polar residues-rich tracts occupy residues 219–244, 268–320, 329–344, 364–380, and 414–428; these read GLSTSVQATPDEGPSTSVPPTATEGL, PSTS…STSV, STSVPPTATEELSTSV, LSTSVPPTASDGSDTSV, and TLFSSSASVDRNPSK. MAGE domains lie at 491-690 and 745-936; these read MEQN…YNEA and LESK…YREA. Residues 743 to 957 form an interaction with DTNA region; sequence SRLESKARKL…HRQIFVHNFR (215 aa).

As to quaternary structure, interacts with DTNA. Interacts with TRIM28.

The protein localises to the cytoplasm. It is found in the perinuclear region. It localises to the nucleus. Its subcellular location is the cell membrane. Functionally, may enhance ubiquitin ligase activity of RING-type zinc finger-containing E3 ubiquitin-protein ligases. Proposed to act through recruitment and/or stabilization of the Ubl-conjugating enzyme (E2) at the E3:substrate complex. This is Melanoma-associated antigen E1 (MAGEE1) from Homo sapiens (Human).